Consider the following 133-residue polypeptide: Small ribosomal subunit protein uS9 (133 aa).

A compositionally biased stretch (basic and acidic residues) spans 98-113 (RKPLKTEGHLSRDPRA). The disordered stretch occupies residues 98-133 (RKPLKTEGHLSRDPRAKERRKYGLKKARKAPQFSKR). Basic residues predominate over residues 114–133 (KERRKYGLKKARKAPQFSKR).

Belongs to the universal ribosomal protein uS9 family.

This Parasynechococcus marenigrum (strain WH8102) protein is Small ribosomal subunit protein uS9.